Consider the following 358-residue polypeptide: Methylthioribose-1-phosphate isomerase (358 aa).

Substrate-binding positions include 54–56 and glutamine 205; that span reads CGA. Aspartate 246 acts as the Proton donor in catalysis. Residue 256 to 257 coordinates substrate; sequence NQ.

This sequence belongs to the eIF-2B alpha/beta/delta subunits family. MtnA subfamily.

It carries out the reaction 5-(methylsulfanyl)-alpha-D-ribose 1-phosphate = 5-(methylsulfanyl)-D-ribulose 1-phosphate. The protein operates within amino-acid biosynthesis; L-methionine biosynthesis via salvage pathway; L-methionine from S-methyl-5-thio-alpha-D-ribose 1-phosphate: step 1/6. Functionally, catalyzes the interconversion of methylthioribose-1-phosphate (MTR-1-P) into methylthioribulose-1-phosphate (MTRu-1-P). The sequence is that of Methylthioribose-1-phosphate isomerase from Pseudomonas fluorescens (strain ATCC BAA-477 / NRRL B-23932 / Pf-5).